Here is a 226-residue protein sequence, read N- to C-terminus: E3 ubiquitin-protein ligase RNF186 (226 aa).

The RING-type zinc-finger motif lies at 39-85; it reads CLVCREPYSGVRPPKLLGCQHAFCAVCLKLLLCVQDDAWSIPCPLCR. The tract at residues 121-143 is disordered; it reads GLANPATLTAGQPREAGEEEQDA. The next 2 membrane-spanning stretches (helical) occupy residues 157-177 and 179-199; these read HLLL…PGVI and WVLS…CSHP.

As to quaternary structure, interacts with BNIP1. Polyubiquitinated. 'Lys-29' autoubiquitination leads to proteasomal degradation.

The protein resides in the endoplasmic reticulum membrane. It catalyses the reaction S-ubiquitinyl-[E2 ubiquitin-conjugating enzyme]-L-cysteine + [acceptor protein]-L-lysine = [E2 ubiquitin-conjugating enzyme]-L-cysteine + N(6)-ubiquitinyl-[acceptor protein]-L-lysine.. It functions in the pathway protein modification; protein ubiquitination. Its function is as follows. E3 ubiquitin protein ligase that is part of an apoptotic signaling pathway activated by endoplasmic reticulum stress. Stimulates the expression of proteins specific of the unfolded protein response (UPR), ubiquitinates BNIP1 and regulates its localization to the mitochondrion and induces calcium release from the endoplasmic reticulum that ultimately leads to cell apoptosis. Plays a role in the maintenance of intestinal homeostasis and clearance of enteric pathogens. Upon NOD2 stimulation, ubiquitinates the ER stress sensor activating transcription factor 6/ATF6 and promotes the unfolded protein response UPR. Participates in basal level of autophagy maintenance by regulating the ubiquitination of EPHB2. Upon stimulation by ligand EFNB1, ubiquitinates EPHB2 and further recruits MAP1LC3B for autophagy induction. Controls nutrient sensing by ubiquitinating Sestrin-2/SESN2, which is an intracellular sensor of cytosolic leucine and inhibitor of mTORC1 activity. The sequence is that of E3 ubiquitin-protein ligase RNF186 from Bos taurus (Bovine).